The following is a 354-amino-acid chain: Large ribosomal subunit protein uL10 (354 aa).

Acidic residues-rich tracts occupy residues 286–296 (DEEALPEELQD) and 307–345 (AEAD…DGDG). The interval 286–354 (DEEALPEELQ…GGDALGDMFG (69 aa)) is disordered.

The protein belongs to the universal ribosomal protein uL10 family. In terms of assembly, part of the 50S ribosomal subunit. Forms part of the ribosomal stalk which helps the ribosome interact with GTP-bound translation factors. Forms a heptameric L10(L12)2(L12)2(L12)2 complex, where L10 forms an elongated spine to which the L12 dimers bind in a sequential fashion.

Its function is as follows. Forms part of the ribosomal stalk, playing a central role in the interaction of the ribosome with GTP-bound translation factors. This is Large ribosomal subunit protein uL10 from Natronomonas pharaonis (strain ATCC 35678 / DSM 2160 / CIP 103997 / JCM 8858 / NBRC 14720 / NCIMB 2260 / Gabara) (Halobacterium pharaonis).